The chain runs to 58 residues: Small ribosomal subunit protein bS21 (58 aa).

The disordered stretch occupies residues 39-58 (EKPSVKRKRKSEVARKRKKF). A compositionally biased stretch (basic residues) spans 43–58 (VKRKRKSEVARKRKKF).

The protein belongs to the bacterial ribosomal protein bS21 family.

The protein is Small ribosomal subunit protein bS21 of Streptococcus pneumoniae (strain ATCC BAA-255 / R6).